Reading from the N-terminus, the 55-residue chain is Large ribosomal subunit protein bL33 (55 aa).

This sequence belongs to the bacterial ribosomal protein bL33 family.

In Phenylobacterium zucineum (strain HLK1), this protein is Large ribosomal subunit protein bL33.